The chain runs to 259 residues: Protein GrpE (259 aa).

2 disordered regions span residues 1–74 (MNSD…IKGS) and 228–259 (PGPKVINEEIPDQSASNQELSESVDGSTKDEN). Over residues 17–40 (SSQNNPSENSVSSPNSNESVNQVE) the composition is skewed to low complexity. 2 stretches are compositionally biased toward polar residues: residues 56–73 (VDTANEQSSTSCESNIKG) and 240–253 (QSASNQELSESVDG).

It belongs to the GrpE family. As to quaternary structure, homodimer.

It is found in the cytoplasm. In terms of biological role, participates actively in the response to hyperosmotic and heat shock by preventing the aggregation of stress-denatured proteins, in association with DnaK and GrpE. It is the nucleotide exchange factor for DnaK and may function as a thermosensor. Unfolded proteins bind initially to DnaJ; upon interaction with the DnaJ-bound protein, DnaK hydrolyzes its bound ATP, resulting in the formation of a stable complex. GrpE releases ADP from DnaK; ATP binding to DnaK triggers the release of the substrate protein, thus completing the reaction cycle. Several rounds of ATP-dependent interactions between DnaJ, DnaK and GrpE are required for fully efficient folding. The sequence is that of Protein GrpE from Prochlorococcus marinus (strain NATL2A).